The sequence spans 660 residues: Poly [ADP-ribose] polymerase 2-A (660 aa).

Residues S2–I36 enclose the SAP 1 domain. The interval E40–E92 is disordered. The Nuclear localization signal signature appears at K69 to R75. The region spanning L91 to P125 is the SAP 2 domain. Residues T179–Y281 form the WGR domain. The region spanning E308–E426 is the PARP alpha-helical domain. The 227-residue stretch at D434–R660 folds into the PARP catalytic domain.

Belongs to the ARTD/PARP family.

The protein resides in the nucleus. It catalyses the reaction NAD(+) + (ADP-D-ribosyl)n-acceptor = nicotinamide + (ADP-D-ribosyl)n+1-acceptor + H(+).. It carries out the reaction L-aspartyl-[protein] + NAD(+) = 4-O-(ADP-D-ribosyl)-L-aspartyl-[protein] + nicotinamide. The catalysed reaction is L-glutamyl-[protein] + NAD(+) = 5-O-(ADP-D-ribosyl)-L-glutamyl-[protein] + nicotinamide. Its function is as follows. Involved in the base excision repair (BER) pathway, by catalyzing the poly(ADP-ribosyl)ation of a limited number of acceptor proteins involved in chromatin architecture and in DNA metabolism. This modification follows DNA damages and appears as an obligatory step in a detection/signaling pathway leading to the reparation of DNA strand breaks. The chain is Poly [ADP-ribose] polymerase 2-A (PARP2-A) from Oryza sativa subsp. japonica (Rice).